The primary structure comprises 122 residues: Large ribosomal subunit protein uL14c (122 aa).

This sequence belongs to the universal ribosomal protein uL14 family. Part of the 50S ribosomal subunit.

It localises to the plastid. Its subcellular location is the chloroplast. Functionally, binds to 23S rRNA. This Amborella trichopoda protein is Large ribosomal subunit protein uL14c.